Consider the following 249-residue polypeptide: LexA repressor (249 aa).

The disordered stretch occupies residues 1–26; the sequence is MAAQATGGRATQRSQQSPAKPKGLTV. The span at 9 to 18 shows a compositional bias: polar residues; it reads RATQRSQQSP. Residues 48–68 constitute a DNA-binding region (H-T-H motif); it reads MREIGDTVGLASLSSVTHQLS. Residues S173 and K210 each act as for autocatalytic cleavage activity in the active site.

It belongs to the peptidase S24 family. In terms of assembly, homodimer.

The catalysed reaction is Hydrolysis of Ala-|-Gly bond in repressor LexA.. In terms of biological role, represses a number of genes involved in the response to DNA damage (SOS response), including recA and lexA. In the presence of single-stranded DNA, RecA interacts with LexA causing an autocatalytic cleavage which disrupts the DNA-binding part of LexA, leading to derepression of the SOS regulon and eventually DNA repair. The chain is LexA repressor from Arthrobacter sp. (strain FB24).